The following is a 301-amino-acid chain: Isonocardicin synthase (301 aa).

As to quaternary structure, monomer.

The catalysed reaction is nocardicin G + S-adenosyl-L-methionine = isonocardicin C + S-methyl-5'-thioadenosine + H(+). It carries out the reaction nocardicin E + S-adenosyl-L-methionine = isonocardicin A + S-methyl-5'-thioadenosine + H(+). It functions in the pathway antibiotic biosynthesis. Functionally, involved in the biosynthesis of the beta-lactam antibiotic nocardicin A. In the presence of S-adenosyl-L-methionine (AdoMet), catalyzes the transfer of a 3-amino-3-carboxypropyl group from AdoMet to nocardicin G, forming isonocardicin C. Can also catalyze the transformation of nocardicin E and F to isonocardicin A and B, respectively, but in vivo substrate is probably nocardicin G. The polypeptide is Isonocardicin synthase (Nocardia uniformis subsp. tsuyamanensis).